Here is a 699-residue protein sequence, read N- to C-terminus: Protein phosphatase 1 regulatory subunit 37 (699 aa).

Over residues 1–12 the composition is skewed to pro residues; the sequence is MEIPPQEAPPGP. A disordered region spans residues 1–42; that stretch reads MEIPPQEAPPGPGADGEAEEAPVEAPSPGPASPPADGRLKAA. Residues S50 and S56 each carry the phosphoserine modification. 5 LRR repeats span residues 220–240, 248–269, 277–297, 306–326, and 334–354; these read SLAV…MLLA, TLRE…AQLG, SLQI…AYIC, GLAT…AFLG, and SLET…RNLK. Residues 467–667 are disordered; that stretch reads RLQLSASMPE…PPGPEAKVGS (201 aa). Residues 510–525 show a composition bias toward acidic residues; it reads SDSDSDSEGEDRDEAD. S566 carries the phosphoserine modification. 2 stretches are compositionally biased toward pro residues: residues 588 to 613 and 622 to 642; these read PPVP…PFPT and DPGP…PPLP.

Belongs to the PPP1R37 family. In terms of assembly, interacts with PPP1CA.

Inhibits phosphatase activity of protein phosphatase 1 (PP1) complexes. The protein is Protein phosphatase 1 regulatory subunit 37 (PPP1R37) of Bos taurus (Bovine).